The following is a 201-amino-acid chain: MAVIFNNKQLLADNSIEKGGELFLFNGSYNILESYVNPVLLKNGVIELEEAAYYAGNILYKTDDPKFIDYINLIIKATHSEELPENSTVVNYRKTMRSGTIHPIKKDIYIYDNKKFTLYDRYIYGYDNNYVNFYEEKNEKEKEYEEEDDKASSLCENKIILSQINCESFENDFKYYLSDYNYAFSIIDNTTNVLVAFGLYR.

Its function is as follows. May have a role in tissue tropism within the insect larvae. This is an uncharacterized protein from Lepidoptera (butterflies and moths).